The following is a 365-amino-acid chain: P2Y purinoceptor 4 (365 aa).

Over 1-34 the chain is Extracellular; sequence MASTESSLLRSLGLSPGPGSSEVELDCWFDEDFK. A helical membrane pass occupies residues 35-61; that stretch reads FILLPVSYAVVFVLGLGLNAPTLWLFI. Residues 62-72 lie on the Cytoplasmic side of the membrane; that stretch reads FRLRPWDATAT. Residues 73 to 95 form a helical membrane-spanning segment; that stretch reads YMFHLALSDTLYVLSLPTLIYYY. The Extracellular segment spans residues 96–112; it reads AAHNHWPFGTEICKFVR. The cysteines at positions 108 and 185 are disulfide-linked. A helical membrane pass occupies residues 113–131; that stretch reads FLFYWNLYCSVLFLTCISV. Topologically, residues 132 to 154 are cytoplasmic; it reads HRYLGICHPLRALRWGRPRLAGL. The helical transmembrane segment at 155 to 174 threads the bilayer; sequence LCLAVWLVVAGCLVPNLFFV. Residues 175-196 are Extracellular-facing; it reads TTSNKGTTVLCHDTTRPEEFDH. A helical transmembrane segment spans residues 197-222; sequence YVHFSSAVMGLLFGVPCLVTLVCYGL. Residues 223–246 lie on the Cytoplasmic side of the membrane; it reads MARRLYQPLPGSAQSSSRLRSLRT. A helical membrane pass occupies residues 247–269; the sequence is IAVVLTVFAVCFVPFHITRTIYY. The Extracellular portion of the chain corresponds to 270–287; that stretch reads LARLLEADCRVLNIVNVV. A helical transmembrane segment spans residues 288 to 309; the sequence is YKVTRPLASANSCLDPVLYLLT. At 310–365 the chain is on the cytoplasmic side; it reads GDKYRRQLRQLCGGGKPQPRTAASSLALVSLPEDSSCRWAATPQDSSCSTPRADRL. Phosphoserine is present on residues serine 333 and serine 334.

Belongs to the G-protein coupled receptor 1 family. Phosphorylation of Ser-333 and Ser-334 is a key step in agonist-dependent desensitization and loss of surface P2RY4. This phosphorylation does not involve PKC, nor other calcium activated kinases. In terms of tissue distribution, pancreas.

The protein localises to the cell membrane. In terms of biological role, receptor for UTP and UDP coupled to G-proteins that activate a phosphatidylinositol-calcium second messenger system. Not activated by ATP or ADP. The chain is P2Y purinoceptor 4 (P2RY4) from Homo sapiens (Human).